Here is a 147-residue protein sequence, read N- to C-terminus: Hemoglobin subunit gamma-2 (147 aa).

The 145-residue stretch at 3–147 folds into the Globin domain; the sequence is HFTEEDKATI…VASALSSRYH (145 aa). Residue T13 is modified to Phosphothreonine. A phosphoserine mark is found at S45, S51, and S53. K60 is modified (N6-acetyllysine). H64 is a binding site for heme b. K83 carries the N6-acetyllysine modification. H93 is a binding site for heme b. The residue at position 94 (C94) is an S-nitrosocysteine. Residues S140, S143, and S144 each carry the phosphoserine modification.

The protein belongs to the globin family. As to quaternary structure, heterotetramer of two alpha chains and two gamma chains in fetal hemoglobin (Hb F). Red blood cells.

Gamma chains make up the fetal hemoglobin F, in combination with alpha chains. This chain is Hemoglobin subunit gamma-2 (HBG2), found in Hylobates lar (Lar gibbon).